We begin with the raw amino-acid sequence, 376 residues long: D-alanine--D-alanine ligase B (376 aa).

Residues 155–361 form the ATP-grasp domain; it reads KRLMRDAGLP…QTDLMDKLIA (207 aa). Residue 184–239 participates in ATP binding; that stretch reads AALGTPDLFVKPANLGSSVGVSRARSEEEFAASCALAFRYDRKILVEQALNGAREI. Mg(2+) contacts are provided by Asp-316, Glu-328, and Asn-330.

This sequence belongs to the D-alanine--D-alanine ligase family. Mg(2+) is required as a cofactor. Requires Mn(2+) as cofactor.

It localises to the cytoplasm. It carries out the reaction 2 D-alanine + ATP = D-alanyl-D-alanine + ADP + phosphate + H(+). It functions in the pathway cell wall biogenesis; peptidoglycan biosynthesis. In terms of biological role, cell wall formation. The protein is D-alanine--D-alanine ligase B of Bradyrhizobium diazoefficiens (strain JCM 10833 / BCRC 13528 / IAM 13628 / NBRC 14792 / USDA 110).